The chain runs to 399 residues: Phosphoglycerate kinase (399 aa).

Substrate is bound by residues Asp-21–Asn-23, Arg-36, His-59–Arg-62, Arg-120, and Arg-158. ATP is bound by residues Lys-209, Gly-297, Glu-328, and Gly-355 to Ser-358.

Belongs to the phosphoglycerate kinase family. As to quaternary structure, monomer.

The protein localises to the cytoplasm. The enzyme catalyses (2R)-3-phosphoglycerate + ATP = (2R)-3-phospho-glyceroyl phosphate + ADP. It functions in the pathway carbohydrate degradation; glycolysis; pyruvate from D-glyceraldehyde 3-phosphate: step 2/5. The protein is Phosphoglycerate kinase of Streptococcus thermophilus (strain ATCC BAA-491 / LMD-9).